A 149-amino-acid chain; its full sequence is Ribosome maturation factor RimP (149 aa).

This sequence belongs to the RimP family.

The protein localises to the cytoplasm. Its function is as follows. Required for maturation of 30S ribosomal subunits. The sequence is that of Ribosome maturation factor RimP from Sulfurimonas denitrificans (strain ATCC 33889 / DSM 1251) (Thiomicrospira denitrificans (strain ATCC 33889 / DSM 1251)).